Here is a 135-residue protein sequence, read N- to C-terminus: Histone H2A (135 aa).

Belongs to the histone H2A family. As to quaternary structure, the nucleosome is a histone octamer containing two molecules each of H2A, H2B, H3 and H4 assembled in one H3-H4 heterotetramer and two H2A-H2B heterodimers. The octamer wraps approximately 147 bp of DNA.

It localises to the nucleus. The protein resides in the chromosome. Functionally, core component of nucleosome. Nucleosomes wrap and compact DNA into chromatin, limiting DNA accessibility to the cellular machineries which require DNA as a template. Histones thereby play a central role in transcription regulation, DNA repair, DNA replication and chromosomal stability. DNA accessibility is regulated via a complex set of post-translational modifications of histones, also called histone code, and nucleosome remodeling. This Trypanosoma cruzi protein is Histone H2A.